The primary structure comprises 110 residues: Plasma membrane ATPase (110 aa).

Mg(2+)-binding residues include aspartate 72 and aspartate 76. The disordered stretch occupies residues 88-110 (APESTSLNLPNDKELSEIAEQAK). A compositionally biased stretch (basic and acidic residues) spans 98–110 (NDKELSEIAEQAK).

It belongs to the cation transport ATPase (P-type) (TC 3.A.3) family. Type IIIA subfamily. The N-terminus is blocked.

Its subcellular location is the cell membrane. The catalysed reaction is ATP + H2O + H(+)(in) = ADP + phosphate + 2 H(+)(out). Its function is as follows. The plasma membrane ATPase of plants and fungi is a hydrogen ion pump. The proton gradient it generates drives the active transport of nutrients by H(+)-symport. The resulting external acidification and/or internal alkinization may mediate growth responses. The protein is Plasma membrane ATPase of Avena sativa (Oat).